We begin with the raw amino-acid sequence, 214 residues long: uncharacterized protein (214 aa).

Transmembrane regions (helical) follow at residues I43–I63, I84–I104, A116–I136, and P150–F170.

It is found in the host membrane. This is an uncharacterized protein from Citrus leprosis virus C (isolate Citrus sinesis/Brazil/Cordeiropolis/2003) (CiLV-C).